The sequence spans 304 residues: Acetyl-coenzyme A carboxylase carboxyl transferase subunit beta (304 aa).

Residues 25 to 294 enclose the CoA carboxyltransferase N-terminal domain; it reads VWTKCDSCGQ…PSVVESKADT (270 aa). Cys29, Cys32, Cys48, and Cys51 together coordinate Zn(2+). The C4-type zinc-finger motif lies at 29-51; the sequence is CDSCGQVLYRAELERNLEVCPKC.

The protein belongs to the AccD/PCCB family. In terms of assembly, acetyl-CoA carboxylase is a heterohexamer composed of biotin carboxyl carrier protein (AccB), biotin carboxylase (AccC) and two subunits each of ACCase subunit alpha (AccA) and ACCase subunit beta (AccD). The cofactor is Zn(2+).

It localises to the cytoplasm. The enzyme catalyses N(6)-carboxybiotinyl-L-lysyl-[protein] + acetyl-CoA = N(6)-biotinyl-L-lysyl-[protein] + malonyl-CoA. It participates in lipid metabolism; malonyl-CoA biosynthesis; malonyl-CoA from acetyl-CoA: step 1/1. In terms of biological role, component of the acetyl coenzyme A carboxylase (ACC) complex. Biotin carboxylase (BC) catalyzes the carboxylation of biotin on its carrier protein (BCCP) and then the CO(2) group is transferred by the transcarboxylase to acetyl-CoA to form malonyl-CoA. This Yersinia pestis bv. Antiqua (strain Nepal516) protein is Acetyl-coenzyme A carboxylase carboxyl transferase subunit beta.